The chain runs to 57 residues: Large ribosomal subunit protein bL32 (57 aa).

Basic residues predominate over residues 1–19 (MATPKFKKSRANTHSRRSQ). The disordered stretch occupies residues 1–20 (MATPKFKKSRANTHSRRSQW).

The protein belongs to the bacterial ribosomal protein bL32 family.

This Corynebacterium aurimucosum (strain ATCC 700975 / DSM 44827 / CIP 107346 / CN-1) (Corynebacterium nigricans) protein is Large ribosomal subunit protein bL32.